The following is a 156-amino-acid chain: Transcription antitermination protein NusB (156 aa).

It belongs to the NusB family.

In terms of biological role, involved in transcription antitermination. Required for transcription of ribosomal RNA (rRNA) genes. Binds specifically to the boxA antiterminator sequence of the ribosomal RNA (rrn) operons. This chain is Transcription antitermination protein NusB, found in Mycobacterium tuberculosis (strain CDC 1551 / Oshkosh).